The sequence spans 183 residues: Putative lipoprotein LpqE (183 aa).

The N-terminal stretch at 1–30 (MSRFKISLPALATRVAVLGFLTLMASVLGG) is a signal peptide. Cys31 is lipidated: N-palmitoyl cysteine. Residue Cys31 is the site of S-diacylglycerol cysteine attachment.

It is found in the cell membrane. The protein is Putative lipoprotein LpqE (lpqE) of Mycobacterium leprae (strain TN).